Here is a 185-residue protein sequence, read N- to C-terminus: MAEGHGDAKGATAHTAADGGHKAPFPPFQKETFASQLVSLTIAFVALYLIVSKLALPRVGGVIEERQKTIDGDLAAAQKLKGESDDALKAYEAELAAARTRAQAIGAETREKLNAAAEAERKTLEERLSAKLADAEKTIAATRTAAMGNVRGIASEAAAAIVQQLAGVQPDSKALDSAVNASIKG.

The disordered stretch occupies residues 1–23; that stretch reads MAEGHGDAKGATAHTAADGGHKA. Over residues 9–18 the composition is skewed to low complexity; it reads KGATAHTAAD. Residues 32 to 51 form a helical membrane-spanning segment; that stretch reads TFASQLVSLTIAFVALYLIV.

Belongs to the ATPase B chain family. F-type ATPases have 2 components, F(1) - the catalytic core - and F(0) - the membrane proton channel. F(1) has five subunits: alpha(3), beta(3), gamma(1), delta(1), epsilon(1). F(0) has three main subunits: a(1), b(2) and c(10-14). The alpha and beta chains form an alternating ring which encloses part of the gamma chain. F(1) is attached to F(0) by a central stalk formed by the gamma and epsilon chains, while a peripheral stalk is formed by the delta and b chains.

The protein resides in the cell inner membrane. F(1)F(0) ATP synthase produces ATP from ADP in the presence of a proton or sodium gradient. F-type ATPases consist of two structural domains, F(1) containing the extramembraneous catalytic core and F(0) containing the membrane proton channel, linked together by a central stalk and a peripheral stalk. During catalysis, ATP synthesis in the catalytic domain of F(1) is coupled via a rotary mechanism of the central stalk subunits to proton translocation. Its function is as follows. Component of the F(0) channel, it forms part of the peripheral stalk, linking F(1) to F(0). The b'-subunit is a diverged and duplicated form of b found in plants and photosynthetic bacteria. The sequence is that of ATP synthase subunit b 2 (atpF2) from Rhodopseudomonas palustris (strain HaA2).